Here is a 228-residue protein sequence, read N- to C-terminus: Uracil-DNA glycosylase (228 aa).

Aspartate 64 serves as the catalytic Proton acceptor.

This sequence belongs to the uracil-DNA glycosylase (UDG) superfamily. UNG family.

It is found in the cytoplasm. It catalyses the reaction Hydrolyzes single-stranded DNA or mismatched double-stranded DNA and polynucleotides, releasing free uracil.. Functionally, excises uracil residues from the DNA which can arise as a result of misincorporation of dUMP residues by DNA polymerase or due to deamination of cytosine. This chain is Uracil-DNA glycosylase, found in Yersinia pestis bv. Antiqua (strain Antiqua).